A 1140-amino-acid chain; its full sequence is Eukaryotic translation initiation factor 3 subunit A (1140 aa).

A PCI domain is found at 319–501 (LQRMAAHVLL…NSIYFGTDLT (183 aa)). 2 stretches are compositionally biased toward basic and acidic residues: residues 588–623 (QNNAREEEEARRQEEESRKAKLAEQKRLEQEQEERE) and 829–899 (AAEE…RGGD). Disordered regions lie at residues 588–630 (QNNA…HQNE) and 829–1140 (AAEE…VKRR). A Phosphoserine modification is found at Ser908. Basic and acidic residues-rich tracts occupy residues 920-976 (ERND…EPDS), 990-1051 (SRDD…EPQR), 1059-1086 (DAPRHADRETRRPAERRDRDVRETRGDQ), and 1109-1130 (TREEKPAAKRDQAQEKENKAGD).

Belongs to the eIF-3 subunit A family. In terms of assembly, component of the eukaryotic translation initiation factor 3 (eIF-3) complex. The eIF-3 complex interacts with pix.

The protein localises to the cytoplasm. RNA-binding component of the eukaryotic translation initiation factor 3 (eIF-3) complex, which is involved in protein synthesis of a specialized repertoire of mRNAs and, together with other initiation factors, stimulates binding of mRNA and methionyl-tRNAi to the 40S ribosome. The eIF-3 complex specifically targets and initiates translation of a subset of mRNAs involved in cell proliferation. This is Eukaryotic translation initiation factor 3 subunit A from Drosophila melanogaster (Fruit fly).